A 153-amino-acid chain; its full sequence is Endoribonuclease YbeY (153 aa).

3 residues coordinate Zn(2+): histidine 118, histidine 122, and histidine 128.

The protein belongs to the endoribonuclease YbeY family. It depends on Zn(2+) as a cofactor.

The protein localises to the cytoplasm. Functionally, single strand-specific metallo-endoribonuclease involved in late-stage 70S ribosome quality control and in maturation of the 3' terminus of the 16S rRNA. The chain is Endoribonuclease YbeY from Staphylococcus saprophyticus subsp. saprophyticus (strain ATCC 15305 / DSM 20229 / NCIMB 8711 / NCTC 7292 / S-41).